Consider the following 141-residue polypeptide: Zinc finger HIT domain-containing protein 3 (141 aa).

An HIT-type; degenerate zinc finger spans residues 1-28 (LEKPKYRCPACRVPYCSVACFRKHKEQC). Positions 8, 11, 24, and 28 each coordinate Zn(2+). At Ser66 the chain carries Phosphoserine.

Thyroid receptor interacting proteins (TRIPs) specifically interact with the ligand binding domain of the thyroid receptor (TR). Requires the presence of thyroid hormone for its interaction. Interacts with NUFIP1. Interacts (via HIT-type zinc finger) with the RUVBL1/RUVBL2 complex in the presence of ADP.

It localises to the cytoplasm. Its subcellular location is the nucleus. This is Zinc finger HIT domain-containing protein 3 (ZNHIT3) from Pan troglodytes (Chimpanzee).